A 53-amino-acid polypeptide reads, in one-letter code: Bowman-Birk type proteinase inhibitor II-4 (53 aa).

Disulfide bonds link Cys-8-Cys-23, Cys-13-Cys-21, Cys-30-Cys-37, and Cys-34-Cys-49.

This sequence belongs to the Bowman-Birk serine protease inhibitor family.

The polypeptide is Bowman-Birk type proteinase inhibitor II-4 (Triticum aestivum (Wheat)).